The primary structure comprises 707 residues: Polyribonucleotide nucleotidyltransferase (707 aa).

The Mg(2+) site is built by Asp-488 and Asp-494. Positions 555–614 (PRLYVMKINPEKIRDVIGKGGAVIRALTEETGTQINIEEDGTITIASNDSAKADEAKRRI) constitute a KH domain. Residues 624 to 692 (GKVYEGAITK…EKGRVKLSMK (69 aa)) enclose the S1 motif domain.

This sequence belongs to the polyribonucleotide nucleotidyltransferase family. Mg(2+) serves as cofactor.

The protein resides in the cytoplasm. It catalyses the reaction RNA(n+1) + phosphate = RNA(n) + a ribonucleoside 5'-diphosphate. Its function is as follows. Involved in mRNA degradation. Catalyzes the phosphorolysis of single-stranded polyribonucleotides processively in the 3'- to 5'-direction. This Polaromonas sp. (strain JS666 / ATCC BAA-500) protein is Polyribonucleotide nucleotidyltransferase.